Consider the following 196-residue polypeptide: Ribonuclease HII (196 aa).

An RNase H type-2 domain is found at 9–196 (SLIAGVDEVG…APVKRAIGLK (188 aa)). Positions 15, 16, and 107 each coordinate a divalent metal cation.

It belongs to the RNase HII family. Requires Mn(2+) as cofactor. The cofactor is Mg(2+).

It localises to the cytoplasm. The enzyme catalyses Endonucleolytic cleavage to 5'-phosphomonoester.. In terms of biological role, endonuclease that specifically degrades the RNA of RNA-DNA hybrids. The chain is Ribonuclease HII from Photorhabdus laumondii subsp. laumondii (strain DSM 15139 / CIP 105565 / TT01) (Photorhabdus luminescens subsp. laumondii).